A 103-amino-acid polypeptide reads, in one-letter code: Small ribosomal subunit protein uS14c (103 aa).

Belongs to the universal ribosomal protein uS14 family. As to quaternary structure, part of the 30S ribosomal subunit.

Its subcellular location is the plastid. The protein localises to the chloroplast. Its function is as follows. Binds 16S rRNA, required for the assembly of 30S particles. In Oryza nivara (Indian wild rice), this protein is Small ribosomal subunit protein uS14c.